A 174-amino-acid polypeptide reads, in one-letter code: UBX domain-containing protein 5 (174 aa).

Residues 8–58 (QKEKFAEDRALLSQQNKEYAESLAKDIAKKEEKDKIRFEAEQKELRKKTIQ) adopt a coiled-coil conformation. The UBX domain maps to 74 to 120 (RLLVRYPNGSRLILSFSPSQPMTSLFDAIILNPACPDYFSVRSVYPR).

Forms a complex composed of deubiquitinating enzyme atx-3, adapter ubxn-5 and cdc-48.1. Interacts with atx-3 (via C-terminus). Interacts with cdc-48.1 (via N-terminus) and cdc-48.2. Specifically expressed in the germline.

Its function is as follows. Probably acts as an adapter for ATPase cdc-48.1 and/or cdc-48.2, conferring substrate specificity. Unlike other UBX domain-containing protein does not bind 'Lys-48'-polyubiquitinated chain. The sequence is that of UBX domain-containing protein 5 from Caenorhabditis elegans.